Consider the following 243-residue polypeptide: MTATLSLKPAATVRGLRKSYGTKEVLQGIDLTINCGEVTALIGRSGSGKSTILRVLAGLSKEHSGSVEISGNPAVAFQEPRLLPWKTVLDNVTFGLNRTDISWSEAQERASALLAEVKLPDSDAAWPLTLSGGQAQRVSLARALISEPELLLLDEPFGALDALTRLTAQDLLLKTVNTRNLGVLLVTHDVSEAIALADHVLLLDDGAITHSLTVDIPGDRRTHPSFASYTAQLLEWLEITTPA.

The ABC transporter domain maps to 11 to 230 (ATVRGLRKSY…RTHPSFASYT (220 aa)). 43–50 (GRSGSGKS) provides a ligand contact to ATP.

The protein belongs to the ABC transporter superfamily. Aliphatic sulfonates importer (TC 3.A.1.17.2) family. The complex is composed of two ATP-binding proteins (SsuB), two transmembrane proteins (SsuC) and a solute-binding protein (SsuA).

The protein resides in the cell membrane. It catalyses the reaction ATP + H2O + aliphatic sulfonate-[sulfonate-binding protein]Side 1 = ADP + phosphate + aliphatic sulfonateSide 2 + [sulfonate-binding protein]Side 1.. In terms of biological role, part of the ABC transporter complex SsuABC involved in aliphatic sulfonates import. Responsible for energy coupling to the transport system. Is also involved in taurine transport. Seems to not be involved in long chain aliphatic sulfonates transport (chain length of eight carbon atoms or more). In Corynebacterium glutamicum (strain ATCC 13032 / DSM 20300 / JCM 1318 / BCRC 11384 / CCUG 27702 / LMG 3730 / NBRC 12168 / NCIMB 10025 / NRRL B-2784 / 534), this protein is Aliphatic sulfonates import ATP-binding protein SsuB.